The primary structure comprises 230 residues: Chalcone--flavanone isomerase (230 aa).

Thr-52, Asn-117, and Ser-194 together coordinate substrate.

Belongs to the chalcone isomerase family.

The catalysed reaction is a chalcone = a flavanone.. Its pathway is secondary metabolite biosynthesis; flavonoid biosynthesis. Catalyzes the intramolecular cyclization of bicyclic chalcones into tricyclic (S)-flavanones. Responsible for the isomerization of 4,2',4',6'-tetrahydroxychalcone (also termed chalcone) into naringenin. The polypeptide is Chalcone--flavanone isomerase (CHI) (Camellia sinensis (Tea plant)).